A 77-amino-acid polypeptide reads, in one-letter code: Translation initiation factor IF-1, chloroplastic (77 aa).

One can recognise an S1-like domain in the interval 1 to 72 (MRKQNLIEME…TKGRITYRLR (72 aa)).

The protein belongs to the IF-1 family. Component of the 30S ribosomal translation pre-initiation complex which assembles on the 30S ribosome in the order IF-2 and IF-3, IF-1 and N-formylmethionyl-tRNA(fMet); mRNA recruitment can occur at any time during PIC assembly.

The protein localises to the plastid. It localises to the chloroplast. Functionally, one of the essential components for the initiation of protein synthesis. Stabilizes the binding of IF-2 and IF-3 on the 30S subunit to which N-formylmethionyl-tRNA(fMet) subsequently binds. Helps modulate mRNA selection, yielding the 30S pre-initiation complex (PIC). Upon addition of the 50S ribosomal subunit IF-1, IF-2 and IF-3 are released leaving the mature 70S translation initiation complex. This is Translation initiation factor IF-1, chloroplastic from Staurastrum punctulatum (Green alga).